Consider the following 103-residue polypeptide: Pyrimidine/purine nucleoside phosphorylase (103 aa).

This sequence belongs to the nucleoside phosphorylase PpnP family.

The enzyme catalyses a purine D-ribonucleoside + phosphate = a purine nucleobase + alpha-D-ribose 1-phosphate. The catalysed reaction is adenosine + phosphate = alpha-D-ribose 1-phosphate + adenine. It carries out the reaction cytidine + phosphate = cytosine + alpha-D-ribose 1-phosphate. It catalyses the reaction guanosine + phosphate = alpha-D-ribose 1-phosphate + guanine. The enzyme catalyses inosine + phosphate = alpha-D-ribose 1-phosphate + hypoxanthine. The catalysed reaction is thymidine + phosphate = 2-deoxy-alpha-D-ribose 1-phosphate + thymine. It carries out the reaction uridine + phosphate = alpha-D-ribose 1-phosphate + uracil. It catalyses the reaction xanthosine + phosphate = alpha-D-ribose 1-phosphate + xanthine. Its function is as follows. Catalyzes the phosphorolysis of diverse nucleosides, yielding D-ribose 1-phosphate and the respective free bases. Can use uridine, adenosine, guanosine, cytidine, thymidine, inosine and xanthosine as substrates. Also catalyzes the reverse reactions. This chain is Pyrimidine/purine nucleoside phosphorylase, found in Methylobacillus flagellatus (strain ATCC 51484 / DSM 6875 / VKM B-1610 / KT).